The primary structure comprises 397 residues: Acetate kinase (397 aa).

Residue Asn7 participates in Mg(2+) binding. Position 14 (Lys14) interacts with ATP. Residue Arg90 participates in substrate binding. Asp147 serves as the catalytic Proton donor/acceptor. Residues 207-211, 282-284, and 330-334 each bind ATP; these read HLGNG, DFR, and GLGEN. Position 383 (Glu383) interacts with Mg(2+).

The protein belongs to the acetokinase family. As to quaternary structure, homodimer. Mg(2+) is required as a cofactor. Requires Mn(2+) as cofactor.

It is found in the cytoplasm. It catalyses the reaction acetate + ATP = acetyl phosphate + ADP. The protein operates within metabolic intermediate biosynthesis; acetyl-CoA biosynthesis; acetyl-CoA from acetate: step 1/2. Functionally, catalyzes the formation of acetyl phosphate from acetate and ATP. Can also catalyze the reverse reaction. The sequence is that of Acetate kinase from Clostridium botulinum (strain ATCC 19397 / Type A).